The chain runs to 558 residues: Dihydroxy-acid dehydratase (558 aa).

Aspartate 78 is a binding site for Mg(2+). Position 119 (cysteine 119) interacts with [2Fe-2S] cluster. Positions 120 and 121 each coordinate Mg(2+). N6-carboxylysine is present on lysine 121. Residue cysteine 192 participates in [2Fe-2S] cluster binding. Glutamate 446 serves as a coordination point for Mg(2+). The active-site Proton acceptor is serine 472.

This sequence belongs to the IlvD/Edd family. In terms of assembly, homodimer. [2Fe-2S] cluster serves as cofactor. It depends on Mg(2+) as a cofactor.

The catalysed reaction is (2R)-2,3-dihydroxy-3-methylbutanoate = 3-methyl-2-oxobutanoate + H2O. It carries out the reaction (2R,3R)-2,3-dihydroxy-3-methylpentanoate = (S)-3-methyl-2-oxopentanoate + H2O. It participates in amino-acid biosynthesis; L-isoleucine biosynthesis; L-isoleucine from 2-oxobutanoate: step 3/4. It functions in the pathway amino-acid biosynthesis; L-valine biosynthesis; L-valine from pyruvate: step 3/4. Its function is as follows. Functions in the biosynthesis of branched-chain amino acids. Catalyzes the dehydration of (2R,3R)-2,3-dihydroxy-3-methylpentanoate (2,3-dihydroxy-3-methylvalerate) into 2-oxo-3-methylpentanoate (2-oxo-3-methylvalerate) and of (2R)-2,3-dihydroxy-3-methylbutanoate (2,3-dihydroxyisovalerate) into 2-oxo-3-methylbutanoate (2-oxoisovalerate), the penultimate precursor to L-isoleucine and L-valine, respectively. The chain is Dihydroxy-acid dehydratase from Campylobacter lari (strain RM2100 / D67 / ATCC BAA-1060).